Here is a 355-residue protein sequence, read N- to C-terminus: U5 small nuclear ribonucleoprotein 40 kDa protein (355 aa).

WD repeat units lie at residues 60-99 (GHKG…INYS), 103-142 (GHKG…LIKR), 145-185 (EHSG…STHL), 187-226 (QHKY…DPLY), 230-269 (SHQD…PPNR), 280-319 (NFEK…LQYC), and 322-355 (GHSG…EIKP).

In terms of assembly, component of the pre-catalytic and catalytic spliceosome complexes. Component of the postcatalytic spliceosome P complex. Part of the U5 snRNP complex. Component of the U4/U6-U5 tri-snRNP complex.

It is found in the nucleus. Functionally, required for pre-mRNA splicing as component of the activated spliceosome. Component of the U5 small nuclear ribonucleoprotein (snRNP) complex and the U4/U6-U5 tri-snRNP complex, building blocks of the spliceosome. The sequence is that of U5 small nuclear ribonucleoprotein 40 kDa protein (snrnp40) from Dictyostelium discoideum (Social amoeba).